Reading from the N-terminus, the 264-residue chain is MRKPVGSKDGSGVYSRQGLDGYTPANSNTRISTATLPRPEPLRPAASSANLGLNSDRLRLAMVQRLRQMGITDDRVLDAMAAVPRHTFVDEALASRAYEDAALPIGHSQTISQPWVVARMIAAVCEARAPSRVLEVGAGCGYQAAVLAQFVREVHSIERIRGLYELARANLRALRLSTRVRLIYGDGTQGVPGVAPFDAIVVAAAGLAIPQALLNQLAPGGRLIAPEGSTSQRLVLIERTGTASWKRMELEAVRFVPLKAGIQS.

The tract at residues 1-49 is disordered; the sequence is MRKPVGSKDGSGVYSRQGLDGYTPANSNTRISTATLPRPEPLRPAASSA. Residues 24–35 show a composition bias toward polar residues; it reads PANSNTRISTAT. The active site involves Ser-112.

Belongs to the methyltransferase superfamily. L-isoaspartyl/D-aspartyl protein methyltransferase family.

The protein localises to the cytoplasm. The catalysed reaction is [protein]-L-isoaspartate + S-adenosyl-L-methionine = [protein]-L-isoaspartate alpha-methyl ester + S-adenosyl-L-homocysteine. Catalyzes the methyl esterification of L-isoaspartyl residues in peptides and proteins that result from spontaneous decomposition of normal L-aspartyl and L-asparaginyl residues. It plays a role in the repair and/or degradation of damaged proteins. The chain is Protein-L-isoaspartate O-methyltransferase from Bordetella avium (strain 197N).